Reading from the N-terminus, the 436-residue chain is Serine/threonine-protein kinase STK11 (436 aa).

Ser31 is subject to Phosphoserine. 2 positions are modified to N6-acetyllysine: Lys44 and Lys48. Residues 45 to 90 (LIGKYLMGDLLGEGSYGKVKEVLDSETLCRRAVKILKKKKLRRIPN) are sufficient for interaction with SIRT1. Residues 49–309 (YLMGDLLGEG…IRQIRQHSWF (261 aa)) enclose the Protein kinase domain. ATP is bound by residues 55 to 63 (LGEGSYGKV) and Lys78. Residues Lys96 and Lys97 each carry the N6-acetyllysine modification. Asp176 functions as the Proton acceptor in the catalytic mechanism. Phosphothreonine; by autocatalysis is present on Thr189. N6-acetyllysine is present on residues Lys296 and Lys311. A Phosphoserine modification is found at Ser325. Residue Thr336 is modified to Phosphothreonine; by autocatalysis. Thr366 is modified (phosphothreonine; by ATM and autocatalysis). The interval 397 to 421 (GTEPQLSSKVKPEGRPGAANPARKV) is disordered. Phosphoserine is present on Ser403. Lys420 carries the N6-acetyllysine modification. Residue Cys422 is the site of S-palmitoyl cysteine attachment. Lys426 is subject to N6-acetyllysine. Ser431 carries the post-translational modification Phosphoserine; by autocatalysis, PKA, PKC/PRKCZ and RPS6KA1. Cys433 carries the cysteine methyl ester modification. Cys433 carries S-farnesyl cysteine lipidation. The residue at position 434 (Lys434) is an N6-acetyllysine. Positions 434–436 (KQQ) are cleaved as a propeptide — removed in mature form.

The protein belongs to the protein kinase superfamily. CAMK Ser/Thr protein kinase family. LKB1 subfamily. As to quaternary structure, catalytic component of a trimeric complex composed of STK11/LKB1, STRAD (STRADA or STRADB) and CAB39/MO25 (CAB39/MO25alpha or CAB39L/MO25beta): the complex tethers STK11/LKB1 in the cytoplasm and stimulates its catalytic activity. Found in a ternary complex composed of SMAD4, STK11/LKB1 and STK11IP. Interacts with NR4A1, p53/TP53, SMAD4, STK11IP and WDR6. Interacts with NISCH; this interaction may increase STK11 activity. Interacts with SIRT1; the interaction deacetylates STK11. Interacts with CDKN1A. Requires Mg(2+) as cofactor. Mn(2+) is required as a cofactor. Phosphorylated by ATM at Thr-366 following ionizing radiation (IR). Phosphorylation at Ser-431 by RPS6KA1 and/or some PKA is required to inhibit cell growth. Phosphorylation at Ser-431 is also required during neuronal polarization to mediate phosphorylation of BRSK1 and BRSK2. Phosphorylation by PKC/PRKCZ at Ser-397 in isoform 2 promotes metformin (or peroxynitrite)-induced nuclear export of STK11 and activation of AMPK. UV radiation -induced phosphorylation at Thr-366 mediates CDKN1A degradation. Post-translationally, acetylated. Deacetylation at Lys-48 enhances cytoplasmic localization and kinase activity in vitro. In terms of tissue distribution, expressed in brain, heart, testis, skeletal muscle and spleen, and weakly in liver and kidney. Isoform 1 is expressed at highest levels in the brain. Isoform 2 is expressed at highest levels in the testis, primarily in postmitotic developing germ cells (at protein level).

Its subcellular location is the nucleus. The protein resides in the cytoplasm. It is found in the membrane. It localises to the mitochondrion. The catalysed reaction is L-seryl-[protein] + ATP = O-phospho-L-seryl-[protein] + ADP + H(+). It catalyses the reaction L-threonyl-[protein] + ATP = O-phospho-L-threonyl-[protein] + ADP + H(+). Its activity is regulated as follows. Activated by forming a complex with STRAD (STRADA or STRADB) and CAB39/MO25 (CAB39/MO25alpha or CAB39L/MO25beta): STRADA (or STRADB)-binding promotes a conformational change of STK11/LKB1 in an active conformation, which is stabilized by CAB39/MO25alpha (or CAB39L/MO25beta) interacting with the STK11/LKB1 activation loop. Sequestration in the nucleus by NR4A1 prevents it from phosphorylating and activating cytoplasmic AMPK. In terms of biological role, tumor suppressor serine/threonine-protein kinase that controls the activity of AMP-activated protein kinase (AMPK) family members, thereby playing a role in various processes such as cell metabolism, cell polarity, apoptosis and DNA damage response. Acts by phosphorylating the T-loop of AMPK family proteins, thus promoting their activity: phosphorylates PRKAA1, PRKAA2, BRSK1, BRSK2, MARK1, MARK2, MARK3, MARK4, NUAK1, NUAK2, SIK1, SIK2, SIK3 and SNRK but not MELK. Also phosphorylates non-AMPK family proteins such as STRADA, PTEN and possibly p53/TP53. Acts as a key upstream regulator of AMPK by mediating phosphorylation and activation of AMPK catalytic subunits PRKAA1 and PRKAA2 and thereby regulates processes including: inhibition of signaling pathways that promote cell growth and proliferation when energy levels are low, glucose homeostasis in liver, activation of autophagy when cells undergo nutrient deprivation, and B-cell differentiation in the germinal center in response to DNA damage. Also acts as a regulator of cellular polarity by remodeling the actin cytoskeleton. Required for cortical neuron polarization by mediating phosphorylation and activation of BRSK1 and BRSK2, leading to axon initiation and specification. Involved in DNA damage response: interacts with p53/TP53 and recruited to the CDKN1A/WAF1 promoter to participate in transcription activation. Able to phosphorylate p53/TP53; the relevance of such result in vivo is however unclear and phosphorylation may be indirect and mediated by downstream STK11/LKB1 kinase NUAK1. Also acts as a mediator of p53/TP53-dependent apoptosis via interaction with p53/TP53: translocates to the mitochondrion during apoptosis and regulates p53/TP53-dependent apoptosis pathways. Regulates UV radiation-induced DNA damage response mediated by CDKN1A. In association with NUAK1, phosphorylates CDKN1A in response to UV radiation and contributes to its degradation which is necessary for optimal DNA repair. Its function is as follows. Has a role in spermiogenesis. This Rattus norvegicus (Rat) protein is Serine/threonine-protein kinase STK11.